The following is a 261-amino-acid chain: uncharacterized protein (261 aa).

3 helical membrane passes run 15–35 (WYSV…IIVC), 87–107 (VYLI…IRNA), and 131–151 (LLLY…YFLI). Residues 234-246 (LEEKKAKRRQNAE) are compositionally biased toward basic and acidic residues. The segment at 234–261 (LEEKKAKRRQNAERRKKRREIAMEQREQ) is disordered.

It localises to the membrane. This is an uncharacterized protein from Caenorhabditis elegans.